The primary structure comprises 971 residues: Piwi-like protein 2 (971 aa).

Arginine 45 carries the symmetric dimethylarginine modification. The residue at position 74 (arginine 74) is an Omega-N-methylarginine; by PRMT5; alternate. Symmetric dimethylarginine; by PRMT5; alternate is present on arginine 74. Arginine 83 is subject to Omega-N-methylarginine; alternate. 2 positions are modified to symmetric dimethylarginine; alternate: arginine 83 and arginine 95. Arginine 95 carries the post-translational modification Omega-N-methylarginine; by PRMT5; alternate. Symmetric dimethylarginine; by PRMT5; alternate is present on arginine 100. Arginine 100 is modified (omega-N-methylarginine; alternate). Positions 102 to 124 (LSANMVRKDREEPRSSLPDPSVL) are disordered. A symmetric dimethylarginine mark is found at arginine 144 and arginine 156. A disordered region spans residues 159–200 (SSIGRGMDKPPSAFGLTARDPPRLPQPPALSPTSLHSADPPP). Arginine 163 carries the post-translational modification Symmetric dimethylarginine; by PRMT5. The region spanning 387 to 500 (SVLDVMHAIY…LLPELSFMTG (114 aa)) is the PAZ domain. At arginine 549 the chain carries Symmetric dimethylarginine; by PRMT5. A Piwi domain is found at 666–957 (MVVCIIMGTR…LAFLSGQILH (292 aa)). Residues aspartate 743, glutamate 781, aspartate 813, and histidine 946 contribute to the active site.

Belongs to the argonaute family. Piwi subfamily. As to quaternary structure, interacts with DDX4, MAEL, EIF3A, EIF4E, EIF4G, PRMT5 and WDR77. Associates with EIF4E- and EIF4G-containing m7G cap-binding complexes. Interacts (when methylated on arginine residues) with TDRD1 and TDRKH/TDRD2. Interacts with TDRD12. Component of the PET complex, at least composed of EXD1, PIWIL2, TDRD12 and piRNAs. Interacts with MOV10L1. Interacts with GPAT2. Interacts with Tex19.1 and, probably, Tex19.2. Interacts (via PIWI domain) with BMAL1 and CLOCK. Interacts with GSK3B. Interacts with TEX15. Mg(2+) serves as cofactor. Post-translationally, arginine methylation by PRMT5 is required for the interaction with Tudor domain-containing protein TDRD1 and subsequent localization to the meiotic nuage, also named P granule. As to expression, expressed in adult testis, specifically in spermatocytes and in spermatogonia. Only detected in primordial germ cells of both sexes. Widely expressed in tumors. Also present at early stages of oocyte growth. Present in the mitotic spermatogonia. Not detected in the first stages of meiosis (preleptotene and leptotene). Detected at the late zygotene stage and increases throughout pachytene, declining from this stage onward until expression stops at the early round spermatid stage (at protein level).

The protein localises to the cytoplasm. Endoribonuclease that plays a central role during spermatogenesis by repressing transposable elements and preventing their mobilization, which is essential for the germline integrity. Plays an essential role in meiotic differentiation of spermatocytes, germ cell differentiation and in self-renewal of spermatogonial stem cells. Its presence in oocytes suggests that it may participate in similar functions during oogenesis in females. Acts via the piRNA metabolic process, which mediates the repression of transposable elements during meiosis by forming complexes composed of piRNAs and Piwi proteins and govern the methylation and subsequent repression of transposons. During piRNA biosynthesis, plays a key role in the piRNA amplification loop, also named ping-pong amplification cycle, by acting as a 'slicer-competent' piRNA endoribonuclease that cleaves primary piRNAs, which are then loaded onto 'slicer-incompetent' PIWIL4. PIWIL2 slicing produces a pre-miRNA intermediate, which is then processed in mature piRNAs, and as well as a 16 nucleotide by-product that is degraded. Required for PIWIL4/MIWI2 nuclear localization and association with secondary piRNAs antisense. Besides their function in transposable elements repression, piRNAs are probably involved in other processes during meiosis such as translation regulation. Indirectly modulates expression of genes such as PDGFRB, SLC2A1, ITGA6, GJA7, THY1, CD9 and STRA8. Represses circadian rhythms by promoting the stability and activity of core clock components BMAL1 and CLOCK by inhibiting GSK3B-mediated phosphorylation and ubiquitination-dependent degradation of these proteins. In Mus musculus (Mouse), this protein is Piwi-like protein 2.